Consider the following 488-residue polypeptide: Protein nucleotidyltransferase YdiU (488 aa).

Residues G91, G93, R94, K114, D126, G127, R177, and R184 each contribute to the ATP site. D253 serves as the catalytic Proton acceptor. The Mg(2+) site is built by N254 and D263. ATP is bound at residue D263.

Belongs to the SELO family. Mg(2+) is required as a cofactor. It depends on Mn(2+) as a cofactor.

It carries out the reaction L-seryl-[protein] + ATP = 3-O-(5'-adenylyl)-L-seryl-[protein] + diphosphate. The catalysed reaction is L-threonyl-[protein] + ATP = 3-O-(5'-adenylyl)-L-threonyl-[protein] + diphosphate. It catalyses the reaction L-tyrosyl-[protein] + ATP = O-(5'-adenylyl)-L-tyrosyl-[protein] + diphosphate. The enzyme catalyses L-histidyl-[protein] + UTP = N(tele)-(5'-uridylyl)-L-histidyl-[protein] + diphosphate. It carries out the reaction L-seryl-[protein] + UTP = O-(5'-uridylyl)-L-seryl-[protein] + diphosphate. The catalysed reaction is L-tyrosyl-[protein] + UTP = O-(5'-uridylyl)-L-tyrosyl-[protein] + diphosphate. Nucleotidyltransferase involved in the post-translational modification of proteins. It can catalyze the addition of adenosine monophosphate (AMP) or uridine monophosphate (UMP) to a protein, resulting in modifications known as AMPylation and UMPylation. This is Protein nucleotidyltransferase YdiU from Bacillus thuringiensis subsp. konkukian (strain 97-27).